The primary structure comprises 231 residues: tRNA (guanine-N(1)-)-methyltransferase (231 aa).

S-adenosyl-L-methionine-binding positions include G109 and 133–138 (IGDYVL).

This sequence belongs to the RNA methyltransferase TrmD family. As to quaternary structure, homodimer.

It is found in the cytoplasm. It catalyses the reaction guanosine(37) in tRNA + S-adenosyl-L-methionine = N(1)-methylguanosine(37) in tRNA + S-adenosyl-L-homocysteine + H(+). Specifically methylates guanosine-37 in various tRNAs. The chain is tRNA (guanine-N(1)-)-methyltransferase from Nocardia farcinica (strain IFM 10152).